The chain runs to 197 residues: Rac-like GTP-binding protein 5 (197 aa).

13–20 is a binding site for GTP; that stretch reads GDGAVGKT. The Effector region signature appears at 35–43; that stretch reads YVPTVFDNF. GTP-binding positions include 60-64 and 118-121; these read DTAGQ and TKLD. Cysteine methyl ester is present on C194. The S-geranylgeranyl cysteine moiety is linked to residue C194. A propeptide spans 195 to 197 (removed in mature form); the sequence is AIL.

The protein belongs to the small GTPase superfamily. Rho family.

Its subcellular location is the cytoplasm. The protein localises to the membrane. Its function is as follows. Inactive GDP-bound Rho GTPases reside in the cytosol, are found in a complex with Rho GDP-dissociation inhibitors (Rho GDIs), and are released from the GDI protein in order to translocate to membranes upon activation. In Oryza sativa subsp. japonica (Rice), this protein is Rac-like GTP-binding protein 5 (RAC5).